The sequence spans 245 residues: Membrane-associated progesterone-binding protein 4 (245 aa).

The chain crosses the membrane as a helical span at residues 6-26 (RFLLSPFVGVTFIVVLVSLYF). Positions 39–138 (KRLFSAEELA…RTYTPVGKLV (100 aa)) constitute a Cytochrome b5 heme-binding domain. Residues 45–138 (EELALYNGTD…RTYTPVGKLV (94 aa)) form a steroid-binding region.

This sequence belongs to the cytochrome b5 family. MAPR subfamily.

Its subcellular location is the membrane. The sequence is that of Membrane-associated progesterone-binding protein 4 from Arabidopsis thaliana (Mouse-ear cress).